A 269-amino-acid chain; its full sequence is Tryptophan synthase alpha chain (269 aa).

Catalysis depends on proton acceptor residues E49 and D60.

Belongs to the TrpA family. In terms of assembly, tetramer of two alpha and two beta chains.

It catalyses the reaction (1S,2R)-1-C-(indol-3-yl)glycerol 3-phosphate + L-serine = D-glyceraldehyde 3-phosphate + L-tryptophan + H2O. It functions in the pathway amino-acid biosynthesis; L-tryptophan biosynthesis; L-tryptophan from chorismate: step 5/5. Its function is as follows. The alpha subunit is responsible for the aldol cleavage of indoleglycerol phosphate to indole and glyceraldehyde 3-phosphate. The polypeptide is Tryptophan synthase alpha chain (Pseudomonas putida (strain W619)).